Reading from the N-terminus, the 311-residue chain is Forkhead box protein R2 (311 aa).

2 disordered regions span residues 56–76 and 90–171; these read PPEMPQKRRPSPDGDGPPCEP and LGSQ…QSPE. Basic and acidic residues predominate over residues 115-128; that stretch reads QKDEGSNCSEDKVV. Over residues 129–143 the composition is skewed to low complexity; sequence ESLPSSSSEQSPLQK. Over residues 153 to 164 the composition is skewed to acidic residues; sequence ELTEEEAEEPDD. The segment at residues 192–294 is a DNA-binding region (fork-head); that stretch reads RPPLNCSHLI…RVLAFAQRER (103 aa).

As to expression, expressed in breast cancer cell lines and primary cancer.

It is found in the nucleus. The sequence is that of Forkhead box protein R2 (FOXR2) from Homo sapiens (Human).